The sequence spans 343 residues: Holliday junction branch migration complex subunit RuvB (343 aa).

The segment at 1–186 (MTEEFDIRQE…FGINLHLEYY (186 aa)) is large ATPase domain (RuvB-L). ATP is bound by residues Leu-25, Arg-26, Gly-67, Lys-70, Thr-71, Thr-72, 133–135 (EDY), Arg-176, Tyr-186, and Arg-223. Residue Thr-71 coordinates Mg(2+). Residues 187-257 (DVHTITGIVE…IACYALEALN (71 aa)) are small ATPAse domain (RuvB-S). The tract at residues 260–343 (RYGLDNVDHK…PRPHRPSLFD (84 aa)) is head domain (RuvB-H). DNA-binding residues include Arg-315 and Arg-320.

The protein belongs to the RuvB family. In terms of assembly, homohexamer. Forms an RuvA(8)-RuvB(12)-Holliday junction (HJ) complex. HJ DNA is sandwiched between 2 RuvA tetramers; dsDNA enters through RuvA and exits via RuvB. An RuvB hexamer assembles on each DNA strand where it exits the tetramer. Each RuvB hexamer is contacted by two RuvA subunits (via domain III) on 2 adjacent RuvB subunits; this complex drives branch migration. In the full resolvosome a probable DNA-RuvA(4)-RuvB(12)-RuvC(2) complex forms which resolves the HJ.

The protein localises to the cytoplasm. It carries out the reaction ATP + H2O = ADP + phosphate + H(+). In terms of biological role, the RuvA-RuvB-RuvC complex processes Holliday junction (HJ) DNA during genetic recombination and DNA repair, while the RuvA-RuvB complex plays an important role in the rescue of blocked DNA replication forks via replication fork reversal (RFR). RuvA specifically binds to HJ cruciform DNA, conferring on it an open structure. The RuvB hexamer acts as an ATP-dependent pump, pulling dsDNA into and through the RuvAB complex. RuvB forms 2 homohexamers on either side of HJ DNA bound by 1 or 2 RuvA tetramers; 4 subunits per hexamer contact DNA at a time. Coordinated motions by a converter formed by DNA-disengaged RuvB subunits stimulates ATP hydrolysis and nucleotide exchange. Immobilization of the converter enables RuvB to convert the ATP-contained energy into a lever motion, pulling 2 nucleotides of DNA out of the RuvA tetramer per ATP hydrolyzed, thus driving DNA branch migration. The RuvB motors rotate together with the DNA substrate, which together with the progressing nucleotide cycle form the mechanistic basis for DNA recombination by continuous HJ branch migration. Branch migration allows RuvC to scan DNA until it finds its consensus sequence, where it cleaves and resolves cruciform DNA. This chain is Holliday junction branch migration complex subunit RuvB, found in Porphyromonas gingivalis (strain ATCC BAA-308 / W83).